The chain runs to 422 residues: Secernin-3 (422 aa).

Positions 1-5 (MEPCS) are excised as a propeptide. Cys6 is a catalytic residue. Cys6 carries the glyoxylic acid (Cys); alternate modification. At Cys6 the chain carries Pyruvic acid (Cys); alternate.

Belongs to the peptidase C69 family. Secernin subfamily.

Functionally, plays a role in thermal nociception. The polypeptide is Secernin-3 (SCRN3) (Bos taurus (Bovine)).